The sequence spans 150 residues: Large ribosomal subunit protein bL9 (150 aa).

It belongs to the bacterial ribosomal protein bL9 family.

Binds to the 23S rRNA. This Streptococcus pyogenes serotype M6 (strain ATCC BAA-946 / MGAS10394) protein is Large ribosomal subunit protein bL9.